Reading from the N-terminus, the 395-residue chain is F-box only protein 7 (395 aa).

One can recognise an F-box domain in the interval 19 to 70; the sequence is NHDWSKLCPDILRKIIESLSSLDFYRAKIVCSDWYSVWKTCVKRPLRPWRII.

The protein is F-box only protein 7 (FBX7) of Arabidopsis thaliana (Mouse-ear cress).